The primary structure comprises 344 residues: Protein RecA (344 aa).

An ATP-binding site is contributed by 66–73 (GPESSGKT).

This sequence belongs to the RecA family.

Its subcellular location is the cytoplasm. In terms of biological role, can catalyze the hydrolysis of ATP in the presence of single-stranded DNA, the ATP-dependent uptake of single-stranded DNA by duplex DNA, and the ATP-dependent hybridization of homologous single-stranded DNAs. It interacts with LexA causing its activation and leading to its autocatalytic cleavage. The protein is Protein RecA of Azoarcus sp. (strain BH72).